A 342-amino-acid polypeptide reads, in one-letter code: Ribosomal RNA small subunit methyltransferase C (342 aa).

Belongs to the methyltransferase superfamily. RsmC family. Monomer.

It is found in the cytoplasm. It carries out the reaction guanosine(1207) in 16S rRNA + S-adenosyl-L-methionine = N(2)-methylguanosine(1207) in 16S rRNA + S-adenosyl-L-homocysteine + H(+). Functionally, specifically methylates the guanine in position 1207 of 16S rRNA in the 30S particle. In Shewanella sp. (strain MR-4), this protein is Ribosomal RNA small subunit methyltransferase C.